A 160-amino-acid chain; its full sequence is RNA-binding protein 3 (160 aa).

An RRM domain is found at 6–84; that stretch reads GKLFVGGLNF…RQIRVDHAGK (79 aa). R47 is modified (omega-N-methylarginine). Residues 81–116 form a disordered region; sequence HAGKSARGSRGGAFGSYERGRGYPRGGGDQGYGSGR. A compositionally biased stretch (gly residues) spans 103–114; sequence YPRGGGDQGYGS. R105 carries the asymmetric dimethylarginine; alternate modification. R105 carries the dimethylated arginine; alternate modification. R105 carries the post-translational modification Omega-N-methylarginine; alternate. Residues R120 and R134 each carry the omega-N-methylarginine modification. The segment at 135 to 160 is disordered; it reads SRDYGGRSQGGYDRYSGGNYRDNYDN. S150 bears the Phosphoserine mark. A Phosphotyrosine modification is found at Y158.

As to quaternary structure, interacts with RPL4. Associates with the 60S ribosomal subunits.

The protein resides in the nucleus. It localises to the cytoplasm. Its subcellular location is the cell projection. The protein localises to the dendrite. Its function is as follows. Cold-inducible mRNA binding protein that enhances global protein synthesis at both physiological and mild hypothermic temperatures. Reduces the relative abundance of microRNAs, when overexpressed. Enhances phosphorylation of translation initiation factors and active polysome formation. The sequence is that of RNA-binding protein 3 from Capra hircus (Goat).